Reading from the N-terminus, the 98-residue chain is Putative pterin-4-alpha-carbinolamine dehydratase (98 aa).

It belongs to the pterin-4-alpha-carbinolamine dehydratase family.

The catalysed reaction is (4aS,6R)-4a-hydroxy-L-erythro-5,6,7,8-tetrahydrobiopterin = (6R)-L-erythro-6,7-dihydrobiopterin + H2O. In Chelativorans sp. (strain BNC1), this protein is Putative pterin-4-alpha-carbinolamine dehydratase.